Here is a 616-residue protein sequence, read N- to C-terminus: Chaperone protein DnaK (616 aa).

Phosphothreonine; by autocatalysis is present on threonine 174. The segment at 575–616 is disordered; sequence QQTQGAQSDPGAAGFGGQQEAPGAGQDENVVDADYKVVDDDK. Residues 607–616 are compositionally biased toward basic and acidic residues; it reads ADYKVVDDDK.

The protein belongs to the heat shock protein 70 family.

Acts as a chaperone. This Ruminiclostridium cellulolyticum (strain ATCC 35319 / DSM 5812 / JCM 6584 / H10) (Clostridium cellulolyticum) protein is Chaperone protein DnaK.